The chain runs to 273 residues: Large ribosomal subunit protein uL2 (273 aa).

Disordered stretches follow at residues 28-53 and 221-273; these read KPFA…TTRH and RGTA…RRSK. Positions 39–48 are enriched in low complexity; sequence KSGGRNNNGR. Residue K242 is modified to N6-acetyllysine.

The protein belongs to the universal ribosomal protein uL2 family. Part of the 50S ribosomal subunit. Forms a bridge to the 30S subunit in the 70S ribosome.

Functionally, one of the primary rRNA binding proteins. Required for association of the 30S and 50S subunits to form the 70S ribosome, for tRNA binding and peptide bond formation. It has been suggested to have peptidyltransferase activity; this is somewhat controversial. Makes several contacts with the 16S rRNA in the 70S ribosome. The polypeptide is Large ribosomal subunit protein uL2 (Shigella dysenteriae serotype 1 (strain Sd197)).